The chain runs to 37 residues: Large ribosomal subunit protein bL36 (37 aa).

It belongs to the bacterial ribosomal protein bL36 family.

The protein is Large ribosomal subunit protein bL36 of Nitrosococcus oceani (strain ATCC 19707 / BCRC 17464 / JCM 30415 / NCIMB 11848 / C-107).